The sequence spans 481 residues: Argininosuccinate lyase (481 aa).

It belongs to the lyase 1 family. Argininosuccinate lyase subfamily.

It localises to the cytoplasm. The catalysed reaction is 2-(N(omega)-L-arginino)succinate = fumarate + L-arginine. It functions in the pathway amino-acid biosynthesis; L-arginine biosynthesis; L-arginine from L-ornithine and carbamoyl phosphate: step 3/3. This Kineococcus radiotolerans (strain ATCC BAA-149 / DSM 14245 / SRS30216) protein is Argininosuccinate lyase.